Here is a 266-residue protein sequence, read N- to C-terminus: Glucosamine-6-phosphate deaminase (266 aa).

Asp-72 functions as the Proton acceptor; for enolization step in the catalytic mechanism. The For ring-opening step role is filled by Asp-141. Catalysis depends on His-143, which acts as the Proton acceptor; for ring-opening step. Catalysis depends on Glu-148, which acts as the For ring-opening step.

It belongs to the glucosamine/galactosamine-6-phosphate isomerase family. NagB subfamily. Homohexamer.

It carries out the reaction alpha-D-glucosamine 6-phosphate + H2O = beta-D-fructose 6-phosphate + NH4(+). It functions in the pathway amino-sugar metabolism; N-acetylneuraminate degradation; D-fructose 6-phosphate from N-acetylneuraminate: step 5/5. With respect to regulation, allosterically activated by N-acetylglucosamine 6-phosphate (GlcNAc6P). Functionally, catalyzes the reversible isomerization-deamination of glucosamine 6-phosphate (GlcN6P) to form fructose 6-phosphate (Fru6P) and ammonium ion. This chain is Glucosamine-6-phosphate deaminase, found in Pectobacterium carotovorum subsp. carotovorum (strain PC1).